Consider the following 119-residue polypeptide: Flagellar transcriptional regulator FlhD (119 aa).

It belongs to the FlhD family. As to quaternary structure, homodimer; disulfide-linked. Forms a heterohexamer composed of two FlhC and four FlhD subunits. Each FlhC binds a FlhD dimer, forming a heterotrimer, and a hexamer assembles by dimerization of two heterotrimers.

The protein localises to the cytoplasm. Its function is as follows. Functions in complex with FlhC as a master transcriptional regulator that regulates transcription of several flagellar and non-flagellar operons by binding to their promoter region. Activates expression of class 2 flagellar genes, including fliA, which is a flagellum-specific sigma factor that turns on the class 3 genes. Also regulates genes whose products function in a variety of physiological pathways. This Enterobacter sp. (strain 638) protein is Flagellar transcriptional regulator FlhD.